A 550-amino-acid polypeptide reads, in one-letter code: Hydroxylamine reductase (550 aa).

Residues C3, C6, C18, and C25 each contribute to the [2Fe-2S] cluster site. The hybrid [4Fe-2O-2S] cluster site is built by H249, E273, C317, C405, C433, C458, E492, and K494. Position 405 is a cysteine persulfide (C405).

The protein belongs to the HCP family. The cofactor is [2Fe-2S] cluster. Requires hybrid [4Fe-2O-2S] cluster as cofactor.

It is found in the cytoplasm. The catalysed reaction is A + NH4(+) + H2O = hydroxylamine + AH2 + H(+). Catalyzes the reduction of hydroxylamine to form NH(3) and H(2)O. This chain is Hydroxylamine reductase, found in Escherichia coli O7:K1 (strain IAI39 / ExPEC).